Reading from the N-terminus, the 382-residue chain is Mannitol-1-phosphate 5-dehydrogenase (382 aa).

3 to 14 (ALHFGAGNIGRG) contacts NAD(+). The residue at position 269 (K269) is an N6-acetyllysine.

This sequence belongs to the mannitol dehydrogenase family.

It catalyses the reaction D-mannitol 1-phosphate + NAD(+) = beta-D-fructose 6-phosphate + NADH + H(+). The sequence is that of Mannitol-1-phosphate 5-dehydrogenase from Escherichia coli (strain ATCC 8739 / DSM 1576 / NBRC 3972 / NCIMB 8545 / WDCM 00012 / Crooks).